We begin with the raw amino-acid sequence, 347 residues long: Secretory carrier-associated membrane protein 3 (347 aa).

A disordered region spans residues 1–88; that stretch reads MAQSRDGGNP…EPKNYGSYST (88 aa). Residues 1 to 170 are Cytoplasmic-facing; that stretch reads MAQSRDGGNP…QKTVSTMYYL (170 aa). Ser-32 carries the post-translational modification Phosphoserine. A Phosphothreonine modification is found at Thr-37. 2 positions are modified to phosphotyrosine: Tyr-41 and Tyr-53. The segment covering 49–66 has biased composition (pro residues); the sequence is PPPAYEPPAPAPLPPPSA. A phosphoserine mark is found at Ser-72 and Ser-76. A Phosphotyrosine modification is found at Tyr-83. Residue Ser-85 is modified to Phosphoserine. 4 helical membrane passes run 171-191, 197-217, 247-267, and 277-297; these read WMCSTLALLLNFLACLASFCV, AGFGLSILWVLLFTPCSFVCW, FVLQAIGIPGWGFSGWISALV, and VLMLLVALLFTGIAVLGIVML. At 298–347 the chain is on the cytoplasmic side; sequence KRIHSLYRRTGASFQKAQQEFAAGVFSNPAVRTAAANAAAGAAENAFRAP. Residue Lys-313 forms a Glycyl lysine isopeptide (Lys-Gly) (interchain with G-Cter in SUMO1) linkage.

It belongs to the SCAMP family. As to quaternary structure, interacts with NEDD4, NEDD4L and TSG101. Interacts with RNF126. Post-translationally, monoubiquitinated. Widely expressed, with highest expression in heart and skeletal muscle.

The protein resides in the membrane. Functionally, functions in post-Golgi recycling pathways. Acts as a recycling carrier to the cell surface. The chain is Secretory carrier-associated membrane protein 3 (SCAMP3) from Homo sapiens (Human).